A 124-amino-acid polypeptide reads, in one-letter code: Late histone H2A.2.1 (124 aa).

Residues 1–18 (MSGRGKGAKAKSKAKSRS) are compositionally biased toward basic residues. The disordered stretch occupies residues 1–21 (MSGRGKGAKAKSKAKSRSSRA). Ser2 carries the N-acetylserine modification. Phosphoserine is present on Ser2. Residue Gln104 is modified to N5-methylglutamine. Lys119 participates in a covalent cross-link: Glycyl lysine isopeptide (Lys-Gly) (interchain with G-Cter in ubiquitin).

It belongs to the histone H2A family. The nucleosome is a histone octamer containing two molecules each of H2A, H2B, H3 and H4 assembled in one H3-H4 heterotetramer and two H2A-H2B heterodimers. The octamer wraps approximately 147 bp of DNA. Monoubiquitination of Lys-119 gives a specific tag for epigenetic transcriptional repression. In terms of processing, phosphorylation of Ser-2 directly represses transcription.

Its subcellular location is the nucleus. It localises to the chromosome. Functionally, core component of nucleosome. Nucleosomes wrap and compact DNA into chromatin, limiting DNA accessibility to the cellular machineries which require DNA as a template. Histones thereby play a central role in transcription regulation, DNA repair, DNA replication and chromosomal stability. DNA accessibility is regulated via a complex set of post-translational modifications of histones, also called histone code, and nucleosome remodeling. This Psammechinus miliaris (Green sea urchin) protein is Late histone H2A.2.1.